The following is a 514-amino-acid chain: Exoglucanase 1 (514 aa).

Residues 1 to 17 (MYQKLALISAFLATARA) form the signal peptide. The segment at 18 to 453 (QSACTLQAET…GSTGNSSGGN (436 aa)) is catalytic. Intrachain disulfides connect cysteine 21-cysteine 89, cysteine 36-cysteine 42, cysteine 67-cysteine 88, cysteine 78-cysteine 84, cysteine 155-cysteine 414, cysteine 189-cysteine 227, cysteine 193-cysteine 226, cysteine 247-cysteine 273, cysteine 255-cysteine 260, and cysteine 278-cysteine 348. Asparagine 62 and asparagine 81 each carry an N-linked (GlcNAc...) asparagine glycan. The active-site Nucleophile is glutamate 229. Residue glutamate 234 is the Proton donor of the active site. N-linked (GlcNAc...) asparagine glycosylation occurs at asparagine 287. 2 disordered regions span residues 401-427 (NETS…LESN) and 444-481 (GSTG…PTQT). The segment at 454–478 (PPGGNPPGTTTTRRPATSTGSSPGP) is linker. Positions 460 to 479 (PGTTTTRRPATSTGSSPGPT) are enriched in low complexity. The region spanning 478–514 (PTQTHYGQCGGIGYSGPTVCASGSTCQVLNPYYSQCL) is the CBM1 domain. 2 disulfides stabilise this stretch: cysteine 486-cysteine 503 and cysteine 497-cysteine 513.

It belongs to the glycosyl hydrolase 7 (cellulase C) family.

The enzyme catalyses Hydrolysis of (1-&gt;4)-beta-D-glucosidic linkages in cellulose and cellotetraose, releasing cellobiose from the non-reducing ends of the chains.. Its function is as follows. The biological conversion of cellulose to glucose generally requires three types of hydrolytic enzymes: (1) Endoglucanases which cut internal beta-1,4-glucosidic bonds; (2) Exocellobiohydrolases that cut the disaccharide cellobiose from the non-reducing end of the cellulose polymer chain; (3) Beta-1,4-glucosidases which hydrolyze the cellobiose and other short cello-oligosaccharides to glucose. The chain is Exoglucanase 1 (cbh1) from Hypocrea rufa (Trichoderma viride).